The following is a 252-amino-acid chain: Trans-aconitate 2-methyltransferase (252 aa).

It belongs to the methyltransferase superfamily. Tam family.

It localises to the cytoplasm. The enzyme catalyses trans-aconitate + S-adenosyl-L-methionine = (E)-3-(methoxycarbonyl)pent-2-enedioate + S-adenosyl-L-homocysteine. Functionally, catalyzes the S-adenosylmethionine monomethyl esterification of trans-aconitate. This chain is Trans-aconitate 2-methyltransferase, found in Escherichia coli (strain UTI89 / UPEC).